The primary structure comprises 131 residues: Histone H2B.2 (131 aa).

The span at 1–19 (MSSAAEKKPASKAPAEKKP) shows a compositional bias: basic and acidic residues. A disordered region spans residues 1 to 37 (MSSAAEKKPASKAPAEKKPAAKKTSTSVDGKKRSKVR). An N6-acetyllysine; alternate mark is found at K7 and K8. Glycyl lysine isopeptide (Lys-Gly) (interchain with G-Cter in SUMO); alternate cross-links involve residues K7 and K8. S11 carries the phosphoserine modification. Position 12 is an N6-acetyllysine (K12). K17, K18, K22, and K23 each carry N6-acetyllysine; alternate. Residues K17 and K18 each participate in a glycyl lysine isopeptide (Lys-Gly) (interchain with G-Cter in SUMO); alternate cross-link. The residue at position 22 (K22) is an N6-butyryllysine; alternate. The residue at position 23 (K23) is an N6-methyllysine; alternate. K35 carries the N6-succinyllysine modification. Position 38 is an N6,N6-dimethyllysine (K38). K47 bears the N6-succinyllysine mark. A Glycyl lysine isopeptide (Lys-Gly) (interchain with G-Cter in ubiquitin) cross-link involves residue K124.

This sequence belongs to the histone H2B family. The nucleosome is a histone octamer containing two molecules each of H2A, H2B, H3 and H4 assembled in one H3-H4 heterotetramer and two H2A-H2B heterodimers. The octamer wraps approximately 147 bp of DNA. Interacts with NAP1. In terms of processing, monoubiquitinated by the RAD6/UBC2-BRE1 complex to form H2BK123ub1. H2BK123ub1 gives a specific tag for epigenetic transcriptional activation and is also prerequisite for H3K4me and H3K79me formation. H2BK123ub1 also modulates the formation of double-strand breaks during meiosis and is a prerequisite for DNA-damage checkpoint activation. Deubiquitination is performed by UBP8 in presence of SGF11. Phosphorylated by STE20 to form H2BS10ph during progression through meiotic prophase. May be correlated with chromosome condensation. H2BS10ph is also formed after H(2)O(2) treatment, and is a step leading to apoptosis. Post-translationally, acetylated by GCN5, a component of the SAGA complex, to form H2BK11ac and H2BK16ac. H2BK16ac can also be formed by ESA1, a component of the NuA4 histone acetyltransferase (HAT) complex. Acetylation of N-terminal lysines and particularly formation of H2BK11acK16ac has a positive effect on transcription. In terms of processing, sumoylation to form H2BK6su or H2BK7su, and probably also H2BK16su or H2BK17su, occurs preferentially near the telomeres and represses gene transcription.

It is found in the nucleus. Its subcellular location is the chromosome. Core component of nucleosome. Nucleosomes wrap and compact DNA into chromatin, limiting DNA accessibility to the cellular machineries which require DNA as a template. Histones thereby play a central role in transcription regulation, DNA repair, DNA replication and chromosomal stability. DNA accessibility is regulated via a complex set of post-translational modifications of histones, also called histone code, and nucleosome remodeling. This Saccharomyces cerevisiae (strain ATCC 204508 / S288c) (Baker's yeast) protein is Histone H2B.2 (HTB2).